A 1052-amino-acid polypeptide reads, in one-letter code: MAYLTDDKASGPEWALLLEQCISHRIISTEFRDFSVIMMRRHPISEKALIRIVLEARSATGLMWDPLIPLYVEVLQKLGYVSLPEILKTLLLFSTIYDDSHPVSKAGPNGKGVKRKKKTSTLMTDNKIIQNVMATITMGQGPKATRGATDVLCAVADWISTLLAWSPSGEGPESDQPGDILGHQDGACIFGSLGLLLVALVGTEKGVSALSSLSKKDRKCLGQALSSYTPICASYSLPLRNRLDSIQKDFNIYPSDSSKGLEESMMGDVNVAVLQFESNVVDIPTTSSRAGLYIYINALLAGRPLIDDSMFLNYLNNRYGGDHISMVEELITAAFDVLSNGMYRNESSKTMFLFRAFLVNKLPPFLAYMSASSMSQIPMEVCITRALSRVDPNTFPSFSETFSMQGNSVLSDVRQEFLFSCALHKLIPESSIERLLGENPMQTLPVGGQFMKDTLIAQINNNPERAEQLLNGIESMEGNAGAIVDAIIEVMHNLCSRKETMTLKSICNSLSRRPQTLDIILLFKSPSFILQPLCSLLDAWKWDEDQGESQLVYDEFGSILLLVLAFKYKYDLTPLDLGINKPDSFILRLLDTGASSQQLKDLTEKQNQNLGAWITALFVAEGISDESMSSCSPQEFYLLVATLFSQSLTACEAGKMEFETLKGGFEYLLEPFLLPALVMALTWLGNHIWESESDLETSLKILHGLVKPASISGEAQEIHRTVLCIASRTLEATLKDTRARHPSRTDISPILDVLEQYHSFRRTGATNQTELDSWRANPAGGGLVTSIRNTFSSLVLWSTDPEISMTPPSYTHRQMLAGIGHVGSERVLQGLIDELKLQTETGSGNLAFDIAATLICAPMAESFTLEQILYRQMDQDKYPLPGCRMLTLRDALGIQRESLSKLIEADPHRAELIIRLHRRVEALCSIPQIAPGDVDVGNIMDSIHLEAVGGDDEQREQHQQQQPDADQSNQGVVAPTGNTPGNLDAMLDAAASAVVADPNGTAGAEAAAGAGLLGNGVGGDAGVGIGTGMNDVFSLMDMGNPEFIDLDMEDML.

A disordered region spans residues 949–982 (GGDDEQREQHQQQQPDADQSNQGVVAPTGNTPGN). Over residues 959-970 (QQQQPDADQSNQ) the composition is skewed to low complexity.

It belongs to the Mediator complex subunit 5 family. Component of the Mediator complex.

The protein localises to the nucleus. Component of the Mediator complex, a coactivator involved in the regulated transcription of nearly all RNA polymerase II-dependent genes. Mediator functions as a bridge to convey information from gene-specific regulatory proteins to the basal RNA polymerase II transcription machinery. Mediator is recruited to promoters by direct interactions with regulatory proteins and serves as a scaffold for the assembly of a functional preinitiation complex with RNA polymerase II and the general transcription factors. The protein is Mediator of RNA polymerase II transcription subunit 5 (NUT1) of Coccidioides immitis (strain RS) (Valley fever fungus).